The sequence spans 69 residues: Toxin Tz2 (69 aa).

The first 7 residues, 1 to 7 (IEVVMGG), serve as a signal peptide directing secretion. An LCN-type CS-alpha/beta domain is found at 8-69 (KEGYLLDKSN…KMWDLKTNKC (62 aa)). 4 cysteine pairs are disulfide-bonded: Cys-19/Cys-69, Cys-23/Cys-45, Cys-31/Cys-50, and Cys-35/Cys-52.

Belongs to the long (4 C-C) scorpion toxin superfamily. Sodium channel inhibitor family. Beta subfamily. As to expression, expressed by the venom gland.

It is found in the secreted. Its function is as follows. Beta toxins bind voltage-independently at site-4 of sodium channels (Nav) and shift the voltage of activation toward more negative potentials thereby affecting sodium channel activation and promoting spontaneous and repetitive firing. The protein is Toxin Tz2 of Tityus zulianus (Venezuelan scorpion).